Reading from the N-terminus, the 318-residue chain is Protein W (318 aa).

2 disordered regions span residues M1–E23 and I54–A318. 4 stretches are compositionally biased toward basic and acidic residues: residues I7–G20, A99–N110, G150–D168, and E175–N193. Phosphoserine; by host is present on residues S249, S257, and S260.

This Sendai virus (strain Ohita) (SeV) protein is Protein W (P/V/C).